A 288-amino-acid chain; its full sequence is NAD(P)H-hydrate epimerase (288 aa).

The transit peptide at 1–59 (MSGLRALLGLGLPVAGSRLPRVRVQAGACRARPTWWGPQRLISGGRGDVEGMASSAVKY) directs the protein to the mitochondrion. Residues 65–275 (AQAVDQELFN…ALEKKYQLNL (211 aa)) form the YjeF N-terminal domain. Residue 119–123 (NNGGD) participates in (6S)-NADPHX binding. A K(+)-binding site is contributed by Asn120. N6-succinyllysine is present on Lys144. K(+) is bound at residue Asp185. Residues 189–195 (GFSFKGE) and Asp218 each bind (6S)-NADPHX. Position 221 (Ser221) interacts with K(+).

Belongs to the NnrE/AIBP family. In terms of assembly, homodimer. Interacts with APOA1 and APOA2. It depends on K(+) as a cofactor. Undergoes physiological phosphorylation during sperm capacitation, downstream to PKA activation.

The protein resides in the mitochondrion. It is found in the secreted. It catalyses the reaction (6R)-NADHX = (6S)-NADHX. The catalysed reaction is (6R)-NADPHX = (6S)-NADPHX. Its function is as follows. Catalyzes the epimerization of the S- and R-forms of NAD(P)HX, a damaged form of NAD(P)H that is a result of enzymatic or heat-dependent hydration. This is a prerequisite for the S-specific NAD(P)H-hydrate dehydratase to allow the repair of both epimers of NAD(P)HX. Accelerates cholesterol efflux from endothelial cells to high-density lipoprotein (HDL) and thereby regulates angiogenesis. The chain is NAD(P)H-hydrate epimerase from Sus scrofa (Pig).